A 325-amino-acid chain; its full sequence is Probable tRNA pseudouridine synthase B (325 aa).

Asp71 (nucleophile) is an active-site residue. In terms of domain architecture, PUA spans 238–313; it reads LPKIYVKDSA…VAASIERVIM (76 aa).

Belongs to the pseudouridine synthase TruB family. Type 2 subfamily.

It carries out the reaction uridine(55) in tRNA = pseudouridine(55) in tRNA. Functionally, could be responsible for synthesis of pseudouridine from uracil-55 in the psi GC loop of transfer RNAs. In Korarchaeum cryptofilum (strain OPF8), this protein is Probable tRNA pseudouridine synthase B.